The sequence spans 293 residues: 4-hydroxy-tetrahydrodipicolinate synthase (293 aa).

Position 45 (Thr45) interacts with pyruvate. Tyr133 functions as the Proton donor/acceptor in the catalytic mechanism. The active-site Schiff-base intermediate with substrate is the Lys161. A pyruvate-binding site is contributed by Ile203.

It belongs to the DapA family. As to quaternary structure, homotetramer; dimer of dimers.

The protein localises to the cytoplasm. It carries out the reaction L-aspartate 4-semialdehyde + pyruvate = (2S,4S)-4-hydroxy-2,3,4,5-tetrahydrodipicolinate + H2O + H(+). Its pathway is amino-acid biosynthesis; L-lysine biosynthesis via DAP pathway; (S)-tetrahydrodipicolinate from L-aspartate: step 3/4. Functionally, catalyzes the condensation of (S)-aspartate-beta-semialdehyde [(S)-ASA] and pyruvate to 4-hydroxy-tetrahydrodipicolinate (HTPA). The sequence is that of 4-hydroxy-tetrahydrodipicolinate synthase from Shewanella piezotolerans (strain WP3 / JCM 13877).